A 111-amino-acid polypeptide reads, in one-letter code: UPF0375 protein ule-4 (111 aa).

Residues 1–18 (MNSRLVLLLAVSVALVSA) form the signal peptide. N-linked (GlcNAc...) asparagine glycosylation is found at Asn-23 and Asn-58.

Belongs to the UPF0375 family.

It is found in the secreted. This is UPF0375 protein ule-4 from Caenorhabditis elegans.